Here is a 114-residue protein sequence, read N- to C-terminus: Replication initiation control protein YabA (114 aa).

His84, Cys86, Cys102, and Cys105 together coordinate Zn(2+).

Belongs to the YabA family. Homotetramer. Interacts with both DnaA and DnaN, acting as a bridge between these two proteins. Zn(2+) serves as cofactor.

The protein resides in the cytoplasm. It is found in the nucleoid. Functionally, involved in control of chromosome replication initiation. Inhibits the cooperative binding of DnaA to the oriC region, thus negatively regulating initiation of chromosome replication. Inhibits the ability of DnaA-ATP to form a helix on DNA; does not disassemble preformed DnaA-DNA helices. Decreases the residence time of DnaA on the chromosome at its binding sites (oriC, replication forks and promoter-binding sites). Tethers DnaA to the replication machinery via the DNA polymerase beta sliding clamp subunit (dnaN). Associates with oriC and other DnaA targets on the chromosome in a DnaA-dependent manner. The sequence is that of Replication initiation control protein YabA from Ligilactobacillus salivarius (strain UCC118) (Lactobacillus salivarius).